A 129-amino-acid polypeptide reads, in one-letter code: Photosystem II reaction center Psb28 protein (129 aa).

Residues 110-129 (GLGYSNNSGNNEGADEASEG) are disordered.

The protein belongs to the Psb28 family. As to quaternary structure, part of the photosystem II complex.

Its subcellular location is the cellular thylakoid membrane. This Synechococcus sp. (strain WH7803) protein is Photosystem II reaction center Psb28 protein.